The primary structure comprises 284 residues: MDAIKKKMQAMKIEKDNALDRADAAEEKVRQITEKLERVEEELRDTQKKMTQTGDDLDKAQEDLSAATSKLEEKEKTVQEAEAEVASLNRRMTLLEEELERAEERLKIATEKLEEATHNVDESERVRKVMENRSLQDEERANTVEAQLKEAQLLAEEADRKYDEVARKLAMVEADLERAEERAEAGENKIVELEEELRVVGNNLKSLEVSEEKALQREDSYEEQIRTVSSRLKEAETRAEFAERSVQKLQKEVDRLEDELVHEKERYKTISEELDSTFQELSGY.

Residues Met1–Tyr284 adopt a coiled-coil conformation. The segment at Glu40–Val78 is disordered.

Belongs to the tropomyosin family. As to expression, isoform a and isoform d are expressed in body wall muscles, vulva, anus muscles and male tail muscles. Located to the myofibrils of thin actin filaments.

Its subcellular location is the cytoplasm. It localises to the myofibril. It is found in the sarcomere. The protein resides in the i band. Its function is as follows. Tropomyosin, in association with the troponin complex, plays a central role in the calcium dependent regulation of muscle contraction. Involved in muscle actin filament organization and muscle arm extension and morphology. Protects actin filaments from depolymerization by unc-60 in vitro. Also has a role in male mating behavior by regulating the copulatory spicules. Binds to F-actin. In Caenorhabditis elegans, this protein is Tropomyosin isoforms a/b/d/f (lev-11).